A 59-amino-acid chain; its full sequence is Insertion element IS986 uncharacterized 6.6 kDa protein (59 aa).

The tract at residues 1-26 (MRKWVRQAQVDAGARPGTTTEESAEI) is disordered.

Belongs to the transposase 8 family.

The polypeptide is Insertion element IS986 uncharacterized 6.6 kDa protein (Mycobacterium tuberculosis).